Reading from the N-terminus, the 449-residue chain is Signal recognition particle protein (449 aa).

GTP-binding positions include 109–116 (GLQGSGKT), 191–195 (DTAGR), and 249–252 (SRID).

It belongs to the GTP-binding SRP family. SRP54 subfamily. In terms of assembly, part of the signal recognition particle protein translocation system, which is composed of SRP and FtsY. SRP is a ribonucleoprotein composed of Ffh and a 4.5S RNA molecule.

It is found in the cytoplasm. It catalyses the reaction GTP + H2O = GDP + phosphate + H(+). Functionally, involved in targeting and insertion of nascent membrane proteins into the cytoplasmic membrane. Binds to the hydrophobic signal sequence of the ribosome-nascent chain (RNC) as it emerges from the ribosomes. The SRP-RNC complex is then targeted to the cytoplasmic membrane where it interacts with the SRP receptor FtsY. Interaction with FtsY leads to the transfer of the RNC complex to the Sec translocase for insertion into the membrane, the hydrolysis of GTP by both Ffh and FtsY, and the dissociation of the SRP-FtsY complex into the individual components. This Rickettsia felis (strain ATCC VR-1525 / URRWXCal2) (Rickettsia azadi) protein is Signal recognition particle protein.